The sequence spans 173 residues: Ribulose bisphosphate carboxylase small subunit, chloroplastic 1 (173 aa).

The N-terminal 52 residues, 1-52 (MMVSTAAVARVRPAQTNMVGAFNGCRSSVAFPATRKANNDLSTLPSSGGRVS), are a transit peptide targeting the chloroplast.

Belongs to the RuBisCO small chain family. In terms of assembly, heterohexadecamer of 8 large and 8 small subunits.

The protein resides in the plastid. Its subcellular location is the chloroplast. RuBisCO catalyzes two reactions: the carboxylation of D-ribulose 1,5-bisphosphate, the primary event in carbon dioxide fixation, as well as the oxidative fragmentation of the pentose substrate. Both reactions occur simultaneously and in competition at the same active site. Although the small subunit is not catalytic it is essential for maximal activity. This Lemna gibba (Swollen duckweed) protein is Ribulose bisphosphate carboxylase small subunit, chloroplastic 1.